Here is a 296-residue protein sequence, read N- to C-terminus: Magnetosome protein MamB (296 aa).

Residues 1–12 (MKFENCRDCREE) are Cytoplasmic-facing. Residues 1–214 (MKFENCRDCR…GLMDSSVDTE (214 aa)) are transmembrane domain (TMD). A helical membrane pass occupies residues 13–33 (VVWWAFTADICMTLFKGVLGL). Residues 34-83 (MSGSVALVADSLHSGADVVASGVTQLSLKISNKPADERYPFGYGNIQYIS) lie on the Lumenal side of the membrane. A helical transmembrane segment spans residues 84–104 (SSIVGSLLLIGASFLMYGSVM). At 105-112 (KLISGTYE) the chain is on the cytoplasmic side. Residues 113–133 (APSIFAAVGASVTVIVNELMY) form a helical membrane-spanning segment. At 134–164 (RYQICVGNENNSPAIIANAWDNRSDAISSAA) the chain is on the lumenal side. A helical membrane pass occupies residues 165–185 (VMVGVIASVIGFPIADTIAAI). Residues 186–296 (GVSALVGRIG…SPAPAAAARA (111 aa)) lie on the Cytoplasmic side of the membrane. Residues 215–296 (LLQTAWQVAM…SPAPAAAARA (82 aa)) are C-terminal domain (CTD).

This sequence belongs to the cation diffusion facilitator (CDF) transporter (TC 2.A.4) family. In terms of assembly, forms heterodimers with MamM. Probably interacts with MamE.

It localises to the magnetosome membrane. Its function is as follows. Plays a dual, essential role in magnetosome formation; required for magnetosome vesicle formation as well as biomineralization. Probably binds and transports iron. Requires heterodimerization with MamM for stability. This chain is Magnetosome protein MamB (mamB), found in Paramagnetospirillum magneticum (strain ATCC 700264 / AMB-1) (Magnetospirillum magneticum).